The primary structure comprises 227 residues: Translation initiation factor 6 (227 aa).

Belongs to the eIF-6 family.

Functionally, binds to the 50S ribosomal subunit and prevents its association with the 30S ribosomal subunit to form the 70S initiation complex. This Pyrococcus furiosus (strain ATCC 43587 / DSM 3638 / JCM 8422 / Vc1) protein is Translation initiation factor 6.